Consider the following 225-residue polypeptide: 3-dehydroquinate dehydratase (225 aa).

3-dehydroquinate contacts are provided by residues Ser-6, Glu-30–Arg-32, and Arg-62. The active-site Proton donor/acceptor is the His-118. Lys-143 (schiff-base intermediate with substrate) is an active-site residue. 3-dehydroquinate is bound by residues Arg-186, Ser-205, and Gln-209.

Belongs to the type-I 3-dehydroquinase family. As to quaternary structure, homodimer.

The enzyme catalyses 3-dehydroquinate = 3-dehydroshikimate + H2O. The protein operates within metabolic intermediate biosynthesis; chorismate biosynthesis; chorismate from D-erythrose 4-phosphate and phosphoenolpyruvate: step 3/7. Functionally, involved in the third step of the chorismate pathway, which leads to the biosynthesis of aromatic amino acids. Catalyzes the cis-dehydration of 3-dehydroquinate (DHQ) and introduces the first double bond of the aromatic ring to yield 3-dehydroshikimate. The sequence is that of 3-dehydroquinate dehydratase from Streptococcus pneumoniae (strain ATCC 700669 / Spain 23F-1).